The primary structure comprises 83 residues: Large ribosomal subunit protein bL31B (83 aa).

The protein belongs to the bacterial ribosomal protein bL31 family. Type B subfamily. As to quaternary structure, part of the 50S ribosomal subunit.

This chain is Large ribosomal subunit protein bL31B, found in Lactobacillus gasseri (strain ATCC 33323 / DSM 20243 / BCRC 14619 / CIP 102991 / JCM 1131 / KCTC 3163 / NCIMB 11718 / NCTC 13722 / AM63).